Reading from the N-terminus, the 198-residue chain is MNHLDRIGVILAGGKSTRFGRPKAMVQYQERYFYEASLDALQHHTDQVLIISHPTLTNQFRRNEGIRVIEDDPRYQGCGPLAGIFTAIEKESAYWYLTAPCDTPFLKKEIYDILFSYLDQEPDKKAVIPVVNGRKQPLIGLYHRSCLAPIQSLLEQQRYKVGFLFQLVDTLFVEDKAFEQLHSSFVNINRPEDLSEWT.

Residues 11–13 (LAG), Lys23, Asp71, and Asp102 contribute to the GTP site. Residue Asp102 coordinates Mg(2+).

This sequence belongs to the MobA family. Mg(2+) is required as a cofactor.

The protein resides in the cytoplasm. It catalyses the reaction Mo-molybdopterin + GTP + H(+) = Mo-molybdopterin guanine dinucleotide + diphosphate. Functionally, transfers a GMP moiety from GTP to Mo-molybdopterin (Mo-MPT) cofactor (Moco or molybdenum cofactor) to form Mo-molybdopterin guanine dinucleotide (Mo-MGD) cofactor. The chain is Probable molybdenum cofactor guanylyltransferase from Halalkalibacterium halodurans (strain ATCC BAA-125 / DSM 18197 / FERM 7344 / JCM 9153 / C-125) (Bacillus halodurans).